The chain runs to 328 residues: MVFSTLEHILTHISFSVVSLLISIHLITLLLGNEIIGLDNSFKKGMIITFFCITGLLVTRWIFSGHLPFSNLYESLIFLSWTFSIFYMVLCLKKKKNYYFNTIITPSILFTQGFATSGLLTEMHQSLILVPALQSHWLMMHVSMMILGYTTLLCGSLLSVAILVITFQELIHMIGKSKTFFFFNETLSFAEIKYMNMNDKKNLLQKTPFMSDSSYINYYRYQFIQQLDRWGYRTISLGFIFLTVGNISGAVWANEAWGSYWNWDPKETWAFITWIIFAIYLHIRKNKKLEYLNSSIVASMGFLIIWICYLGINLLGIGLHSYGSFTSN.

Transmembrane regions (helical) follow at residues 12–32, 45–65, 72–92, 100–120, 145–165, 234–254, 263–283, and 296–316; these read HISF…LLLG, GMII…IFSG, LYES…VLCL, FNTI…SGLL, MILG…ILVI, TISL…VWAN, WDPK…YLHI, and IVAS…NLLG.

It belongs to the CcmF/CycK/Ccl1/NrfE/CcsA family. May interact with Ccs1.

It localises to the plastid. Its subcellular location is the chloroplast thylakoid membrane. Its function is as follows. Required during biogenesis of c-type cytochromes (cytochrome c6 and cytochrome f) at the step of heme attachment. The chain is Cytochrome c biogenesis protein CcsA from Phaseolus vulgaris (Kidney bean).